The chain runs to 263 residues: Regulatory protein RecX (263 aa).

Belongs to the RecX family.

The protein localises to the cytoplasm. In terms of biological role, modulates RecA activity. The sequence is that of Regulatory protein RecX from Bacillus velezensis (strain DSM 23117 / BGSC 10A6 / LMG 26770 / FZB42) (Bacillus amyloliquefaciens subsp. plantarum).